The primary structure comprises 168 residues: Regulatory protein RecX (168 aa).

Belongs to the RecX family.

It is found in the cytoplasm. Modulates RecA activity. The protein is Regulatory protein RecX of Serratia proteamaculans (strain 568).